Here is a 61-residue protein sequence, read N- to C-terminus: Large ribosomal subunit protein uL30 (61 aa).

The protein belongs to the universal ribosomal protein uL30 family. As to quaternary structure, part of the 50S ribosomal subunit.

This Bordetella avium (strain 197N) protein is Large ribosomal subunit protein uL30.